Reading from the N-terminus, the 809-residue chain is Zinc finger CCCH domain-containing protein 24 (809 aa).

At Met-1 the chain carries N-acetylmethionine. The tract at residues 1–74 (METSSIEINE…NLESSDTKIT (74 aa)) is disordered. A compositionally biased stretch (polar residues) spans 30–46 (ETSSIDELPSSDSNATD). A compositionally biased stretch (basic and acidic residues) spans 51-65 (VGEKRKRADEDEKTN). The C3H1-type zinc finger occupies 79 to 107 (WWKTSLCSYFRREASCSHGNECKYAHGEA). Gln-536 and Glu-586 together coordinate S-adenosyl-L-methionine. Residues 652-693 (EEMTNSEHVADQNLPPSNTQVEELQDNEQKDSSSLEPEKTTK) form a disordered region. Residues 678–692 (NEQKDSSSLEPEKTT) show a composition bias toward basic and acidic residues. Asp-704 contacts S-adenosyl-L-methionine. Cys-732 functions as the Nucleophile in the catalytic mechanism.

The protein belongs to the class I-like SAM-binding methyltransferase superfamily. RNA M5U methyltransferase family.

The polypeptide is Zinc finger CCCH domain-containing protein 24 (Arabidopsis thaliana (Mouse-ear cress)).